The primary structure comprises 165 residues: MALLALLLVVALPRVWTDANLTARQRDPEDSQRTDEGDNRVWCHVCERENTFECQNPRRCKWTEPYCVIAAVKIFPRFFMVAKQCSAGCAAMERPKPEEKRFLLEEPMPFFYLKCCKIRYCNLEGPPINSSVFKEYAGSMGESCGGLWLAILLLLASIAAGLSLS.

Residues 1–17 (MALLALLLVVALPRVWT) form the signal peptide. A glycan (N-linked (GlcNAc...) asparagine) is linked at N20. The region spanning 47 to 141 (ERENTFECQN…VFKEYAGSMG (95 aa)) is the UPAR/Ly6 domain. Residue G138 is the site of GPI-anchor amidated glycine attachment. Positions 139-165 (SMGESCGGLWLAILLLLASIAAGLSLS) are cleaved as a propeptide — removed in mature form.

As to quaternary structure, interacts with TEX101. Specifically expressed in testis (at protein level).

The protein localises to the secreted. Its subcellular location is the cytoplasm. It localises to the cell membrane. It is found in the cytoplasmic vesicle. The protein resides in the secretory vesicle. The protein localises to the acrosome. Its subcellular location is the membrane raft. Its function is as follows. Required for sperm migration into the oviduct and male fertility by controlling binding of sperm to zona pellucida. May play a role in cell growth. The polypeptide is Lymphocyte antigen 6K (Homo sapiens (Human)).